The chain runs to 379 residues: MSGVVRTLSRCLLPAEAGARERRAGAARDAEREARRRSRDIDALLARERRAVRRLVKILLLGAGESGKSTFLKQMRIIHGREFDQKALLEFRDTIFDNILKGSRVLVDARDKLGIPWQHSENEKHGMFLMAFENKAGLPVEPATFQLYVPALSALWRDSGIREAFSRRSEFQLGESVKYFLDNLDRIGQLNYFPSKQDILLARKATKGIVEHDFVIKKIPFKMVDVGGQRSQRQKWFQCFDGITSILFMVSSSEYDQVLMEDRRTNRLVESMNIFETIVNNKLFFNVSIILFLNKMDLLVEKVKSVSIKKHFPDFKGDPHRLEDVQRYLVQCFDRKRRNRGKPLFHHFTTAIDTENIRFVFHAVKDTILQENLKDIMLQ.

A lipid anchor (S-palmitoyl cysteine) is attached at Cys-11. The region spanning 54–379 is the G-alpha domain; it reads RLVKILLLGA…QENLKDIMLQ (326 aa). Residues 57–70 are G1 motif; it reads KILLLGAGESGKST. Residues 65 to 70 and 200 to 203 contribute to the GTP site; these read ESGKST and LLAR. A Mg(2+)-binding site is contributed by Ser-69. A G2 motif region spans residues 198 to 206; the sequence is DILLARKAT. Position 206 (Thr-206) interacts with Mg(2+). Thr-206 carries the post-translational modification Phosphothreonine. Residues 221–230 are G3 motif; that stretch reads FKMVDVGGQR. Residues 290–297 are G4 motif; it reads ILFLNKMD. GTP is bound by residues 294–297 and Ala-351; that span reads NKMD. Positions 349–354 are G5 motif; sequence TTAIDT.

It belongs to the G-alpha family. G(12) subfamily. G proteins are composed of 3 units; alpha, beta and gamma. The alpha chain contains the guanine nucleotide binding site. Interacts with UBXD5. Interacts (in GTP-bound form) with PPP5C (via TPR repeats); activates PPP5C phosphatase activity and translocates PPP5C to the cell membrane. Interacts with RGS22. Interacts (via N-terminus) with NAPA; the interaction promotes CDH5 localization to plasma membrane. Interacts with CTNND1 (via N-terminus); the interaction regulates CDH1-mediated cell-cell adhesion. Interacts with PPP2R1A; the interaction promotes protein phosphatase 2A activation causing dephosphorylation of MAPT. Interacts (in GTP-bound form) with ARHGEF1. Interacts (in GTP-bound form) with ARHGEF11 (via RGS domain). Interacts (in GTP-bound form) with ARHGEF12 (via RGS domain).

It localises to the cell membrane. It is found in the lateral cell membrane. Its subcellular location is the cytoplasm. Functionally, guanine nucleotide-binding proteins (G proteins) are involved as modulators or transducers in various transmembrane signaling systems. Activates effector molecule RhoA by binding and activating RhoGEFs (ARHGEF12/LARG). GNA12-dependent Rho signaling subsequently regulates transcription factor AP-1 (activating protein-1). GNA12-dependent Rho signaling also regulates protein phosphatese 2A activation causing dephosphorylation of its target proteins. Promotes tumor cell invasion and metastasis by activating RhoA/ROCK signaling pathway and up-regulating pro-inflammatory cytokine production. Inhibits CDH1-mediated cell adhesion in process independent from Rho activation. Together with NAPA promotes CDH5 localization to plasma membrane. May play a role in the control of cell migration through the TOR signaling cascade. This chain is Guanine nucleotide-binding protein subunit alpha-12 (Gna12), found in Rattus norvegicus (Rat).